Consider the following 317-residue polypeptide: ATP synthase gamma chain (317 aa).

This sequence belongs to the ATPase gamma chain family. In terms of assembly, F-type ATPases have 2 components, CF(1) - the catalytic core - and CF(0) - the membrane proton channel. CF(1) has five subunits: alpha(3), beta(3), gamma(1), delta(1), epsilon(1). CF(0) has three main subunits: a, b and c.

Its subcellular location is the cellular thylakoid membrane. In terms of biological role, produces ATP from ADP in the presence of a proton gradient across the membrane. The gamma chain is believed to be important in regulating ATPase activity and the flow of protons through the CF(0) complex. In Acaryochloris marina (strain MBIC 11017), this protein is ATP synthase gamma chain.